A 251-amino-acid chain; its full sequence is 3-deoxy-manno-octulosonate cytidylyltransferase (251 aa).

This sequence belongs to the KdsB family.

It is found in the cytoplasm. The catalysed reaction is 3-deoxy-alpha-D-manno-oct-2-ulosonate + CTP = CMP-3-deoxy-beta-D-manno-octulosonate + diphosphate. It functions in the pathway nucleotide-sugar biosynthesis; CMP-3-deoxy-D-manno-octulosonate biosynthesis; CMP-3-deoxy-D-manno-octulosonate from 3-deoxy-D-manno-octulosonate and CTP: step 1/1. Its pathway is bacterial outer membrane biogenesis; lipopolysaccharide biosynthesis. Functionally, activates KDO (a required 8-carbon sugar) for incorporation into bacterial lipopolysaccharide in Gram-negative bacteria. In Brucella canis (strain ATCC 23365 / NCTC 10854 / RM-666), this protein is 3-deoxy-manno-octulosonate cytidylyltransferase.